Reading from the N-terminus, the 579-residue chain is SLAIN motif-containing protein 1 (579 aa).

6 disordered regions span residues 1–21, 60–95, 135–162, 233–258, 289–313, and 347–454; these read MMAE…GPGP, LLLQ…GPGA, GGGG…PPTL, YTSR…LEDD, STSA…TCSD, and IPHS…PGQI. Residues 9-21 show a composition bias toward low complexity; sequence ASPVAASGAGPGP. Residues 21–56 are a coiled coil; the sequence is PVVNAELEVKKLQELVRKLEKQNEQLRSRAASAAAA. The span at 63-73 shows a compositional bias: pro residues; it reads QPPPPSAPPPA. Residues 141–154 show a composition bias toward low complexity; sequence EPGTAGTPPGEAAT. The segment covering 233–243 has biased composition (polar residues); it reads YTSRGSPLSPQ. At S241 the chain carries Phosphoserine. Low complexity-rich tracts occupy residues 244–253 and 289–305; these read SSIDSELSTS and STSA…SLSS. A compositionally biased stretch (polar residues) spans 362–373; sequence SPSTQYFPSNNF. Residues 374 to 390 are compositionally biased toward low complexity; sequence QQPQYYPPQAQTADQQP. Residues 412-432 are compositionally biased toward polar residues; it reads AAASSNLSSPVTVRSSQSFDS. Residue R469 is modified to Asymmetric dimethylarginine. The tract at residues 479-516 is disordered; it reads SPTVQGSSSSGSSGSSGGSGSGMPLSNGTQLYSTTGIP. Residues 502–516 are compositionally biased toward polar residues; the sequence is PLSNGTQLYSTTGIP. The residue at position 554 (R554) is an Asymmetric dimethylarginine.

It belongs to the SLAIN motif-containing family. Interacts with MAPRE1, MAPRE2, MAPRE3 and CKAP5. Interacts with ZDHHC17 (via ANK repeats). In terms of tissue distribution, expressed in embryonic stem cells. Expressed in adult bone marrow, brain, kidney, lung, testis and thymus. Expressed in colon. Isoform 1 is highly expressed in brain. Isoform 2 is more widely expressed in bone marrow, brain, colon, kidney, lung and thymus.

It localises to the cytoplasm. The protein resides in the cytoskeleton. Microtubule plus-end tracking protein that might be involved in the regulation of cytoplasmic microtubule dynamics, microtubule organization and microtubule elongation. This chain is SLAIN motif-containing protein 1 (Slain1), found in Mus musculus (Mouse).